The primary structure comprises 304 residues: Nucleotide-binding protein KRH_12070 (304 aa).

Residue 27-34 (GMSGAGRS) coordinates ATP. Residue 78–81 (DVRG) participates in GTP binding.

It belongs to the RapZ-like family.

In terms of biological role, displays ATPase and GTPase activities. This is Nucleotide-binding protein KRH_12070 from Kocuria rhizophila (strain ATCC 9341 / DSM 348 / NBRC 103217 / DC2201).